We begin with the raw amino-acid sequence, 79 residues long: Small ribosomal subunit protein bS16cz (79 aa).

It belongs to the bacterial ribosomal protein bS16 family.

The protein localises to the plastid. It localises to the chloroplast. In Arabidopsis thaliana (Mouse-ear cress), this protein is Small ribosomal subunit protein bS16cz.